The chain runs to 131 residues: Fluoride-specific ion channel FluC 1 (131 aa).

4 consecutive transmembrane segments (helical) span residues 4–24, 32–52, 66–86, and 95–115; these read ILLI…LSGW, FPLG…LVMY, ILLT…SYES, and LMQL…AVYL. Residues Gly-74 and Thr-77 each contribute to the Na(+) site.

This sequence belongs to the fluoride channel Fluc/FEX (TC 1.A.43) family.

The protein resides in the cell membrane. It catalyses the reaction fluoride(in) = fluoride(out). Its activity is regulated as follows. Na(+) is not transported, but it plays an essential structural role and its presence is essential for fluoride channel function. Its function is as follows. Fluoride-specific ion channel. Important for reducing fluoride concentration in the cell, thus reducing its toxicity. In Methanosarcina acetivorans (strain ATCC 35395 / DSM 2834 / JCM 12185 / C2A), this protein is Fluoride-specific ion channel FluC 1.